The sequence spans 225 residues: Ribonuclease 3 (225 aa).

In terms of domain architecture, RNase III spans 4–133 (FEKLEKLLGY…LIAAIYLDSN (130 aa)). Residue Glu-46 participates in Mg(2+) binding. Residue Asp-50 is part of the active site. Mg(2+) is bound by residues Asn-119 and Glu-122. Glu-122 is an active-site residue. One can recognise a DRBM domain in the interval 158 to 225 (DPKTALQEWA…AARKLLHKLK (68 aa)).

It belongs to the ribonuclease III family. In terms of assembly, homodimer. Mg(2+) is required as a cofactor.

The protein localises to the cytoplasm. It catalyses the reaction Endonucleolytic cleavage to 5'-phosphomonoester.. Digests double-stranded RNA. Involved in the processing of primary rRNA transcript to yield the immediate precursors to the large and small rRNAs (23S and 16S). Processes some mRNAs, and tRNAs when they are encoded in the rRNA operon. Processes pre-crRNA and tracrRNA of type II CRISPR loci if present in the organism. In Rickettsia felis (strain ATCC VR-1525 / URRWXCal2) (Rickettsia azadi), this protein is Ribonuclease 3.